A 73-amino-acid polypeptide reads, in one-letter code: Translation initiation factor IF-1 (73 aa).

The S1-like domain maps to 1–72 (MAKDEIIEFE…SKGRITYRGK (72 aa)).

Belongs to the IF-1 family. As to quaternary structure, component of the 30S ribosomal translation pre-initiation complex which assembles on the 30S ribosome in the order IF-2 and IF-3, IF-1 and N-formylmethionyl-tRNA(fMet); mRNA recruitment can occur at any time during PIC assembly.

The protein resides in the cytoplasm. Its function is as follows. One of the essential components for the initiation of protein synthesis. Stabilizes the binding of IF-2 and IF-3 on the 30S subunit to which N-formylmethionyl-tRNA(fMet) subsequently binds. Helps modulate mRNA selection, yielding the 30S pre-initiation complex (PIC). Upon addition of the 50S ribosomal subunit IF-1, IF-2 and IF-3 are released leaving the mature 70S translation initiation complex. This chain is Translation initiation factor IF-1, found in Psychrobacter arcticus (strain DSM 17307 / VKM B-2377 / 273-4).